Consider the following 538-residue polypeptide: Pyruvate kinase (538 aa).

Position 45 is a phosphoserine (serine 45). Arginine 72 is a substrate binding site. Residues asparagine 74, serine 76, aspartate 107, and threonine 108 each contribute to the K(+) site. Asparagine 74 to histidine 77 contacts ATP. ATP-binding residues include arginine 114 and lysine 200. Glutamate 265 contacts Mg(2+). Substrate contacts are provided by glycine 288, aspartate 289, and threonine 321. Position 289 (aspartate 289) interacts with Mg(2+).

The protein belongs to the pyruvate kinase family. Homotetramer. Mg(2+) is required as a cofactor. It depends on K(+) as a cofactor.

It catalyses the reaction pyruvate + ATP = phosphoenolpyruvate + ADP + H(+). It functions in the pathway carbohydrate degradation; glycolysis; pyruvate from D-glyceraldehyde 3-phosphate: step 5/5. This chain is Pyruvate kinase (pki1), found in Hypocrea jecorina (Trichoderma reesei).